The following is a 430-amino-acid chain: Adenylosuccinate synthetase (430 aa).

GTP-binding positions include 12–18 and 40–42; these read GDEGKGK and GHT. Residue Asp13 is the Proton acceptor of the active site. Mg(2+)-binding residues include Asp13 and Gly40. IMP is bound by residues 13–16, 38–41, Thr130, Arg144, Gln224, Thr239, and Arg303; these read DEGK and NAGH. The Proton donor role is filled by His41. Residue 299–305 coordinates substrate; that stretch reads VVTGRKR. Residues Arg305, 331–333, and 413–415 contribute to the GTP site; these read KLD and STS.

The protein belongs to the adenylosuccinate synthetase family. As to quaternary structure, homodimer. Requires Mg(2+) as cofactor.

It localises to the cytoplasm. It catalyses the reaction IMP + L-aspartate + GTP = N(6)-(1,2-dicarboxyethyl)-AMP + GDP + phosphate + 2 H(+). It functions in the pathway purine metabolism; AMP biosynthesis via de novo pathway; AMP from IMP: step 1/2. Functionally, plays an important role in the de novo pathway of purine nucleotide biosynthesis. Catalyzes the first committed step in the biosynthesis of AMP from IMP. The sequence is that of Adenylosuccinate synthetase from Methylobacterium nodulans (strain LMG 21967 / CNCM I-2342 / ORS 2060).